A 357-amino-acid polypeptide reads, in one-letter code: UDP-N-acetylglucosamine--N-acetylmuramyl-(pentapeptide) pyrophosphoryl-undecaprenol N-acetylglucosamine transferase (357 aa).

Residues 12 to 14 (TGG), N124, R163, S189, I243, 262 to 267 (ALTVSE), and Q288 each bind UDP-N-acetyl-alpha-D-glucosamine.

The protein belongs to the glycosyltransferase 28 family. MurG subfamily.

The protein resides in the cell inner membrane. It catalyses the reaction di-trans,octa-cis-undecaprenyl diphospho-N-acetyl-alpha-D-muramoyl-L-alanyl-D-glutamyl-meso-2,6-diaminopimeloyl-D-alanyl-D-alanine + UDP-N-acetyl-alpha-D-glucosamine = di-trans,octa-cis-undecaprenyl diphospho-[N-acetyl-alpha-D-glucosaminyl-(1-&gt;4)]-N-acetyl-alpha-D-muramoyl-L-alanyl-D-glutamyl-meso-2,6-diaminopimeloyl-D-alanyl-D-alanine + UDP + H(+). It participates in cell wall biogenesis; peptidoglycan biosynthesis. Functionally, cell wall formation. Catalyzes the transfer of a GlcNAc subunit on undecaprenyl-pyrophosphoryl-MurNAc-pentapeptide (lipid intermediate I) to form undecaprenyl-pyrophosphoryl-MurNAc-(pentapeptide)GlcNAc (lipid intermediate II). The sequence is that of UDP-N-acetylglucosamine--N-acetylmuramyl-(pentapeptide) pyrophosphoryl-undecaprenol N-acetylglucosamine transferase from Pseudomonas paraeruginosa (strain DSM 24068 / PA7) (Pseudomonas aeruginosa (strain PA7)).